A 779-amino-acid chain; its full sequence is Lysosome membrane protein 2-A (779 aa).

Residues M1–C17 lie on the Cytoplasmic side of the membrane. A helical transmembrane segment spans residues L18–L38. Topologically, residues L39–K732 are lumenal. N-linked (GlcNAc...) asparagine glycosylation is found at N44, N86, N95, N114, N117, N201, N239, N262, N266, N277, N369, N410, N440, N508, N543, N601, N619, N651, and N693. The chain crosses the membrane as a helical span at residues I733–G753. The Cytoplasmic portion of the chain corresponds to I754–E779. Residues G771–A774 carry the Tyrosine-type lysosomal sorting signal motif.

It belongs to the CD36 family. Heavily glycosylated.

The protein localises to the lysosome membrane. Its function is as follows. May act as a lysosomal receptor. May be involved in macropinocytosis and fluid phase exocytosis. Binds to the anionic phospholipid phosphoinositol 4,5-bisphosphate, but not to phosphatidylcholine and only weakly to phosphatidylserine. The polypeptide is Lysosome membrane protein 2-A (lmpA) (Dictyostelium discoideum (Social amoeba)).